Here is a 196-residue protein sequence, read N- to C-terminus: Pyridoxal 5'-phosphate synthase subunit PdxT (196 aa).

46–48 (GES) provides a ligand contact to L-glutamine. Cys78 (nucleophile) is an active-site residue. L-glutamine is bound by residues Arg105 and 133-134 (IR). Residues His169 and Glu171 each act as charge relay system in the active site.

Belongs to the glutaminase PdxT/SNO family. As to quaternary structure, in the presence of PdxS, forms a dodecamer of heterodimers. Only shows activity in the heterodimer.

It carries out the reaction aldehydo-D-ribose 5-phosphate + D-glyceraldehyde 3-phosphate + L-glutamine = pyridoxal 5'-phosphate + L-glutamate + phosphate + 3 H2O + H(+). It catalyses the reaction L-glutamine + H2O = L-glutamate + NH4(+). The protein operates within cofactor biosynthesis; pyridoxal 5'-phosphate biosynthesis. In terms of biological role, catalyzes the hydrolysis of glutamine to glutamate and ammonia as part of the biosynthesis of pyridoxal 5'-phosphate. The resulting ammonia molecule is channeled to the active site of PdxS. This Geobacillus stearothermophilus (Bacillus stearothermophilus) protein is Pyridoxal 5'-phosphate synthase subunit PdxT.